Here is a 404-residue protein sequence, read N- to C-terminus: Cysteine desulfurase IscS (404 aa).

Pyridoxal 5'-phosphate-binding positions include 75 to 76 (AT), asparagine 155, glutamine 183, and 203 to 205 (SGH). Lysine 206 bears the N6-(pyridoxal phosphate)lysine mark. Threonine 243 contacts pyridoxal 5'-phosphate. Cysteine 328 (cysteine persulfide intermediate) is an active-site residue. Residue cysteine 328 coordinates [2Fe-2S] cluster.

Belongs to the class-V pyridoxal-phosphate-dependent aminotransferase family. NifS/IscS subfamily. As to quaternary structure, homodimer. Forms a heterotetramer with IscU, interacts with other sulfur acceptors. The cofactor is pyridoxal 5'-phosphate.

The protein resides in the cytoplasm. The enzyme catalyses (sulfur carrier)-H + L-cysteine = (sulfur carrier)-SH + L-alanine. It functions in the pathway cofactor biosynthesis; iron-sulfur cluster biosynthesis. Master enzyme that delivers sulfur to a number of partners involved in Fe-S cluster assembly, tRNA modification or cofactor biosynthesis. Catalyzes the removal of elemental sulfur atoms from cysteine to produce alanine. Functions as a sulfur delivery protein for Fe-S cluster synthesis onto IscU, an Fe-S scaffold assembly protein, as well as other S acceptor proteins. This Shewanella amazonensis (strain ATCC BAA-1098 / SB2B) protein is Cysteine desulfurase IscS.